A 1130-amino-acid chain; its full sequence is Transmembrane channel-like protein 3 (1130 aa).

Residues 1–148 lie on the Cytoplasmic side of the membrane; the sequence is MKTSKASQRY…ASYFIFLRWL (148 aa). The helical transmembrane segment at 149–169 threads the bilayer; sequence FGINIVLTVMTGAFVVLPELI. The Extracellular portion of the chain corresponds to 170–192; the sequence is AGQPFGSTASKTIPREQITSAQD. A helical transmembrane segment spans residues 193–213; that stretch reads LDTVWSLGGYLQYSVLFYGYY. The Cytoplasmic portion of the chain corresponds to 214 to 225; sequence GRERRIGRAGYR. Residues 226–246 traverse the membrane as a helical segment; it reads LPLAYFLVGMAVFAYSFIVLL. Over 247–319 the chain is Extracellular; the sequence is KRMAKNSRTS…KNMAVTVCLR (73 aa). N-linked (GlcNAc...) asparagine glycosylation is present at Asn-264. A helical membrane pass occupies residues 320–340; it reads IIANILVLLSLAGSIYLIYFV. Residues 341-361 are Cytoplasmic-facing; that stretch reads VDRSQKLEQSKKELTLWEKNE. The helical transmembrane segment at 362–382 threads the bilayer; sequence VSVVVSLVTMLAPSAFDLIAA. Residues 383 to 393 are Extracellular-facing; sequence LEMYHPRTTLR. A helical transmembrane segment spans residues 394 to 414; that stretch reads FQLARVLVLYLGNLYSLIIAL. Over 415–509 the chain is Cytoplasmic; the sequence is LDKVNSMNIE…CWETYVGQEM (95 aa). The helical transmembrane segment at 510-530 threads the bilayer; sequence LKLSVIDMLFTVASILLIDFF. The Extracellular segment spans residues 531-570; it reads RGLFVRYLSDYWCWDLESKFPEYGEFKIAENVLHLVYNQG. A helical membrane pass occupies residues 571–591; the sequence is MIWMGAFFSPCLPAFNVLKLI. Over 592 to 619 the chain is Cytoplasmic; it reads GLMYLRSWAVLTCNVPHQQVFRASRSNN. Residues 620-640 traverse the membrane as a helical segment; sequence FYLAMLLFMLFLCMLPTIFAI. Over 641–680 the chain is Extracellular; the sequence is VHYKPSLNCGPFSGQEKIYDIVSETIENDFPTWFHAVVGH. The chain crosses the membrane as a helical span at residues 681–701; the sequence is ISSPVVILPAVLLLFMLIYYL. The Cytoplasmic portion of the chain corresponds to 702-1130; sequence QSIARSLKLS…DLNDLICSNV (429 aa). Disordered stretches follow at residues 742–774, 819–893, 999–1019, 1033–1059, and 1097–1116; these read DARQ…EESS, RSLP…FQPI, SSCF…KYQR, QLER…LKAR, and QGRF…KSRQ. Residues 747 to 767 show a composition bias toward polar residues; sequence GSATEAESSENSKPKTLQARI. Residues 840–850 show a composition bias toward basic and acidic residues; the sequence is SRSRPEQDTNR. The span at 856–876 shows a compositional bias: polar residues; it reads CSSTSNLHKNRSCSSVTQTQP. 2 stretches are compositionally biased toward basic and acidic residues: residues 878–890 and 1006–1017; these read KDVR…RKDF and DRSENNTRDPKY. Over residues 1097 to 1106 the composition is skewed to polar residues; that stretch reads QGRFPRSASQ.

It belongs to the TMC family. As to expression, detected in most neuronal organs and also in some non-neuronal tissues.

The protein resides in the membrane. Functionally, probable component of an ion channel. Molecular function hasn't been characterized yet. The protein is Transmembrane channel-like protein 3 of Mus musculus (Mouse).